A 360-amino-acid polypeptide reads, in one-letter code: DNA polymerase IV (360 aa).

One can recognise a UmuC domain in the interval 6-187 (IIHVDMDAFY…LKIGDLHGVG (182 aa)). Mg(2+)-binding residues include Asp10 and Asp105. The active site involves Glu106.

Belongs to the DNA polymerase type-Y family. Monomer. The cofactor is Mg(2+).

The protein localises to the cytoplasm. It catalyses the reaction DNA(n) + a 2'-deoxyribonucleoside 5'-triphosphate = DNA(n+1) + diphosphate. Poorly processive, error-prone DNA polymerase involved in untargeted mutagenesis. Copies undamaged DNA at stalled replication forks, which arise in vivo from mismatched or misaligned primer ends. These misaligned primers can be extended by PolIV. Exhibits no 3'-5' exonuclease (proofreading) activity. May be involved in translesional synthesis, in conjunction with the beta clamp from PolIII. This Exiguobacterium sibiricum (strain DSM 17290 / CCUG 55495 / CIP 109462 / JCM 13490 / 255-15) protein is DNA polymerase IV.